Reading from the N-terminus, the 142-residue chain is Baculoviral IAP repeat-containing protein 5 (142 aa).

Residues 18–88 (RVSTFKNWPF…KHSSGCAFLS (71 aa)) form a BIR repeat. Position 20 is a phosphoserine; by AURKC (serine 20). Lysine 23 carries the N6-acetyllysine modification. At threonine 34 the chain carries Phosphothreonine; by CDK1 and CDK15. A Phosphothreonine modification is found at threonine 48. Residues cysteine 57, cysteine 60, histidine 77, and cysteine 84 each coordinate Zn(2+). Residues lysine 90, lysine 110, lysine 112, and lysine 115 each carry the N6-acetyllysine modification. Threonine 117 bears the Phosphothreonine; by AURKB mark. Lysine 129 carries the post-translational modification N6-acetyllysine.

Belongs to the IAP family. In terms of assembly, monomer or homodimer. Exists as a homodimer in the apo state and as a monomer in the CPC-bound state. The monomer protects cells against apoptosis more efficiently than the dimer. Only the dimeric form is capable of enhancing tubulin stability in cells. When phosphorylated, interacts with LAMTOR5/HBXIP; the resulting complex binds pro-CASP9, as well as active CASP9, but much less efficiently. Component of the chromosomal passenger complex (CPC) composed of at least BIRC5/survivin, CDCA8/borealin, INCENP, AURKB or AURKC; in the complex forms a triple-helix bundle-based subcomplex with INCENP and CDCA8. Interacts with JTB. Interacts (via BIR domain) with histone H3 phosphorylated at 'Thr-3' (H3pT3). Interacts with EVI5. Interacts with GTP-bound RAN in both the S and M phases of the cell cycle. Interacts with USP9X. Interacts with tubulin. Interacts with BIRC2/c-IAP1. The acetylated form at Lys-129 interacts with STAT3. The monomeric form deacetylated at Lys-129 interacts with XPO1/CRM1. The monomeric form interacts with XIAP/BIRC4. Both the dimeric and monomeric form can interact with DIABLO/SMAC. Interacts with BIRC6/bruce. Interacts with FBXL7; this interaction facilitates the polyubiquitination and subsequent proteasomal degradation of BIRC5 by the SCF(FBXL7) E3 ubiquitin-protein ligase complex. In terms of processing, ubiquitinated by the Cul9-RING ubiquitin-protein ligase complex, leading to its degradation. Ubiquitination is required for centrosomal targeting. Deubiquitinated by USP35 or USP38; leading to stabilization. Acetylation at Lys-129 results in its homodimerization, while deacetylation promotes the formation of monomers which heterodimerize with XPO1/CRM1 which facilitates its nuclear export. The acetylated form represses STAT3 transactivation. The dynamic equilibrium between its acetylation and deacetylation at Lys-129 determines its interaction with XPO1/CRM1, its subsequent subcellular localization, and its ability to inhibit STAT3 transactivation. Post-translationally, in vitro phosphorylation at Thr-117 by AURKB prevents interaction with INCENP and localization to mitotic chromosomes. Phosphorylation at Thr-48 by CK2 is critical for its mitotic and anti-apoptotic activities. Phosphorylation at Thr-34 by CDK15 is critical for its anti-apoptotic activity. Phosphorylation at Ser-20 by AURKC is critical for regulation of proper chromosome alignment and segregation, and possibly cytokinesis.

The protein localises to the cytoplasm. Its subcellular location is the nucleus. It localises to the chromosome. It is found in the centromere. The protein resides in the cytoskeleton. The protein localises to the spindle. Its subcellular location is the kinetochore. It localises to the midbody. Its function is as follows. Multitasking protein that has dual roles in promoting cell proliferation and preventing apoptosis. Component of a chromosome passage protein complex (CPC) which is essential for chromosome alignment and segregation during mitosis and cytokinesis. Acts as an important regulator of the localization of this complex; directs CPC movement to different locations from the inner centromere during prometaphase to midbody during cytokinesis and participates in the organization of the center spindle by associating with polymerized microtubules. Involved in the recruitment of CPC to centromeres during early mitosis via association with histone H3 phosphorylated at 'Thr-3' (H3pT3) during mitosis. The complex with RAN plays a role in mitotic spindle formation by serving as a physical scaffold to help deliver the RAN effector molecule TPX2 to microtubules. May counteract a default induction of apoptosis in G2/M phase. The acetylated form represses STAT3 transactivation of target gene promoters. May play a role in neoplasia. Inhibitor of CASP3 and CASP7. Essential for the maintenance of mitochondrial integrity and function. The chain is Baculoviral IAP repeat-containing protein 5 (BIRC5) from Canis lupus familiaris (Dog).